A 209-amino-acid polypeptide reads, in one-letter code: Potassium-transporting ATPase KdpC subunit (209 aa).

Residues 18 to 38 form a helical membrane-spanning segment; that stretch reads MLAVFTLFGLGLAYSLVATGI.

This sequence belongs to the KdpC family. As to quaternary structure, the system is composed of three essential subunits: KdpA, KdpB and KdpC.

The protein localises to the cell inner membrane. Functionally, part of the high-affinity ATP-driven potassium transport (or Kdp) system, which catalyzes the hydrolysis of ATP coupled with the electrogenic transport of potassium into the cytoplasm. This subunit acts as a catalytic chaperone that increases the ATP-binding affinity of the ATP-hydrolyzing subunit KdpB by the formation of a transient KdpB/KdpC/ATP ternary complex. The polypeptide is Potassium-transporting ATPase KdpC subunit (Xanthomonas oryzae pv. oryzae (strain MAFF 311018)).